Reading from the N-terminus, the 1067-residue chain is [F-actin]-monooxygenase MICAL1 (1067 aa).

The segment at 1-489 (MASPTSTNPA…RDLYDVLAKE (489 aa)) is monooxygenase domain. FAD is bound by residues Cys95, 114–116 (EKR), 121–123 (RHN), Phe181, Tyr293, and Asp393. At Thr475 the chain carries Phosphothreonine. The 105-residue stretch at 508–612 (AGTQEELLRW…YLSHFHSAFK (105 aa)) folds into the Calponin-homology (CH) domain. Phosphoserine is present on Ser617. A disordered region spans residues 645-688 (SRAKENAEDAGGKKLRLEMEAETPSTEVPPDPEPGVPLTPPSQH). Residues 646–663 (RAKENAEDAGGKKLRLEM) show a composition bias toward basic and acidic residues. Positions 646–666 (RAKENAEDAGGKKLRLEMEAE) form a coiled coil. Over residues 671–684 (EVPPDPEPGVPLTP) the composition is skewed to pro residues. The LIM zinc-binding domain maps to 695-757 (DLCALCGEHL…LQHLPQTDHK (63 aa)). Zn(2+) is bound by residues Cys697, Cys700, His718, Cys721, Cys724, Cys727, Cys747, and His750. Over residues 755-766 (DHKAEGSDRGPE) the composition is skewed to basic and acidic residues. 2 disordered regions span residues 755–838 (DHKA…RSCS) and 867–886 (KEEK…VPLD). Positions 773 to 789 (PSENSMPPGLSTPTASQ) are enriched in polar residues. Phosphoserine is present on residues Ser872, Ser875, and Ser876. The span at 876–886 (SEEEEEDVPLD) shows a compositional bias: acidic residues. Positions 901 to 1067 (GTMNNYPTWR…ELALGTGAQG (167 aa)) are important for interaction with RAB8A. Residues 918–1067 (KEEEMKRFCK…ELALGTGAQG (150 aa)) form the bMERB domain. Coiled coils occupy residues 919–962 (EEEM…QSSS) and 999–1027 (NLEE…AADR). Residue Ser1057 is modified to Phosphoserine.

The protein belongs to the Mical family. As to quaternary structure, interacts with STK38 and STK38L. Interacts with RAB1B, RAB8A, RAB10, RAB13, RAB15 and RAB35 (in their GTP-bound forms); binding to RAB1B is of low affinity compared to other Rab proteins; at least in case of RAB8A and RAB10 can bind 2 molecules of the Rab proteins simultaneously; ternary complex formation of RAB8A, RAB13 and MICAL1 is possible. Associates with the SH3 domain of NEDD9. Interacts with VIM and PLXNA3. Interacts with GRAF1/ARHGAP26, GRAF2/ARHGAP10, RAB8A, RAB8B and RAB10; may bind simultaneously to GRAFs and Rabs and connects GRAFs to Rabs. Does not interact with RAB1 and RAB11A. Requires FAD as cofactor. As to expression, expressed in the thymus, lung, spleen, kidney, testis and hematopoietic cells.

Its subcellular location is the cytoplasm. The protein localises to the cytoskeleton. It localises to the endosome membrane. It is found in the midbody. It catalyses the reaction L-methionyl-[F-actin] + NADPH + O2 + H(+) = L-methionyl-(R)-S-oxide-[F-actin] + NADP(+) + H2O. It carries out the reaction NADPH + O2 + H(+) = H2O2 + NADP(+). Functionally, monooxygenase that promotes depolymerization of F-actin by mediating oxidation of specific methionine residues on actin to form methionine-sulfoxide, resulting in actin filament disassembly and preventing repolymerization. In the absence of actin, it also functions as a NADPH oxidase producing H(2)O(2). Acts as a cytoskeletal regulator that connects NEDD9 to intermediate filaments. Also acts as a negative regulator of apoptosis via its interaction with STK38 and STK38L; acts by antagonizing STK38 and STK38L activation by MST1/STK4. Involved in regulation of lamina-specific connectivity in the nervous system such as the development of lamina-restricted hippocampal connections. Through redox regulation of the actin cytoskeleton controls the intracellular distribution of secretory vesicles containing L1/neurofascin/NgCAM family proteins in neurons, thereby regulating their cell surface levels. May act as Rab effector protein and play a role in vesicle trafficking. Promotes endosomal tubule extension by associating with RAB8 (RAB8A or RAB8B), RAB10 and GRAF (GRAF1/ARHGAP26 or GRAF2/ARHGAP10) on the endosomal membrane which may connect GRAFs to Rabs, thereby participating in neosynthesized Rab8-Rab10-Rab11-dependent protein export. The sequence is that of [F-actin]-monooxygenase MICAL1 (MICAL1) from Homo sapiens (Human).